The following is a 209-amino-acid chain: Outer-membrane lipoprotein carrier protein (209 aa).

An N-terminal signal peptide occupies residues 1–21 (MKLLKLLSVAALSAASMMANA).

This sequence belongs to the LolA family. In terms of assembly, monomer.

The protein localises to the periplasm. Functionally, participates in the translocation of lipoproteins from the inner membrane to the outer membrane. Only forms a complex with a lipoprotein if the residue after the N-terminal Cys is not an aspartate (The Asp acts as a targeting signal to indicate that the lipoprotein should stay in the inner membrane). The sequence is that of Outer-membrane lipoprotein carrier protein from Hahella chejuensis (strain KCTC 2396).